The primary structure comprises 224 residues: UPF0758 protein PSPPH_0210 (224 aa).

Residues 102-224 (ALENPTQVRN…PLSMVERGLM (123 aa)) form the MPN domain. Zn(2+) is bound by residues His-173, His-175, and Asp-186. The JAMM motif signature appears at 173-186 (HNHPSGITTPSRSD).

Belongs to the UPF0758 family.

The protein is UPF0758 protein PSPPH_0210 of Pseudomonas savastanoi pv. phaseolicola (strain 1448A / Race 6) (Pseudomonas syringae pv. phaseolicola (strain 1448A / Race 6)).